The sequence spans 79 residues: Sperm-specific basic nuclear protein SP4 (79 aa).

Residues 1–79 (MSKVSGGSRR…ARDYGSDYRS (79 aa)) form a disordered region. Basic residues predominate over residues 9–60 (RRTRARRPMSNRRGRRSQSAAHRSRAQRRRRRTGTTRRARTSTARRARTRTA). Repeats lie at residues 45 to 52 (RRARTSTA) and 53 to 60 (RRARTRTA). Positions 61 to 79 (RRSDLTRMMARDYGSDYRS) are enriched in basic and acidic residues.

The protein localises to the nucleus. This Xenopus laevis (African clawed frog) protein is Sperm-specific basic nuclear protein SP4 (sp4-a).